A 503-amino-acid chain; its full sequence is Hemogen (503 aa).

Composition is skewed to basic residues over residues 1–10 and 61–79; these read MDMGKGRPRL and KKRKYQRTGKGNKRGRKRQ. Residues 1 to 129 form a disordered region; that stretch reads MDMGKGRPRL…PLVPSPTKAV (129 aa). The segment at 7 to 87 is necessary for nuclear localization; the sequence is RPRLKLPQMP…RQGNVEQKAE (81 aa). Phosphoserine occurs at positions 90, 103, 124, 153, 158, 171, 213, 223, 228, 241, and 269. The residue at position 286 (T286) is a Phosphothreonine. The disordered stretch occupies residues 381 to 503; sequence QKTIQESPEP…ENGIYSSALF (123 aa). Low complexity predominate over residues 385–396; that stretch reads QESPEPEQYSPE. 2 positions are modified to phosphoserine: S387 and S394. Positions 426–436 are enriched in basic and acidic residues; that stretch reads CQDREEPKHSL.

As to expression, expressed in hematopoietic precursor cells. Highly expressed in bone marrow, the red pulp of the spleen and round spermatids. Weakly expressed in peripheral blood cells.

The protein resides in the nucleus. Its function is as follows. Regulates the proliferation and differentiation of hematopoietic cells. Overexpression block the TPA-induced megakaryocytic differentiation in the K562 cell model. May also prevent cell apoptosis through the activation of the nuclear factor-kappa B (NF-kB). In Mus musculus (Mouse), this protein is Hemogen (Hemgn).